The sequence spans 298 residues: MTDLHTDVERYLRYLSVERQLSPITLLNYQRQLEAIINFASENGLQSWQQCDAAMVRNFAVRSRHKGLGAASLALRLSALRSFFDWLVSQNELKANPAKGVSAPKAPRHLPKNIDVDDMNRLLDIDINDPLAVRDRAMLEVMYGAGLRLSELVGLDIKHLDLESGEVWVMGKGSKERRLPIGRNAVAWIEHWLDLRDLFGSEDDALFLSKLGKRISARNVQKRFAEWGIKQGLNNHVHPHKLRHSFATHMLESSGDLRGVQELLGHANLSTTQIYTHLDFQHLASVYDAAHPRAKRGK.

Residues 2-88 enclose the Core-binding (CB) domain; it reads TDLHTDVERY…ALRSFFDWLV (87 aa). The region spanning 109–288 is the Tyr recombinase domain; that stretch reads HLPKNIDVDD…DFQHLASVYD (180 aa). Catalysis depends on residues arginine 148, lysine 172, histidine 240, arginine 243, and histidine 266. Tyrosine 275 acts as the O-(3'-phospho-DNA)-tyrosine intermediate in catalysis.

The protein belongs to the 'phage' integrase family. XerC subfamily. As to quaternary structure, forms a cyclic heterotetrameric complex composed of two molecules of XerC and two molecules of XerD, in which XerC interacts with XerD via its C-terminal region, XerD interacts with XerC via its C-terminal region and so on.

Its subcellular location is the cytoplasm. FtsK may regulate the catalytic switch between XerC and XerD in the heterotetrameric complex during the two steps of the recombination process. Site-specific tyrosine recombinase, which acts by catalyzing the cutting and rejoining of the recombining DNA molecules. Binds cooperatively to specific DNA consensus sequences that are separated from XerD binding sites by a short central region, forming the heterotetrameric XerC-XerD complex that recombines DNA substrates. The complex is essential to convert dimers of the bacterial chromosome into monomers to permit their segregation at cell division. It also contributes to the segregational stability of plasmids. In the complex XerC specifically exchanges the top DNA strands. This chain is Tyrosine recombinase XerC, found in Shigella flexneri serotype 5b (strain 8401).